A 326-amino-acid polypeptide reads, in one-letter code: Probable 9-O-acetyl-N-acetylneuraminic acid deacetylase (326 aa).

Positions 1 to 21 (MNAIISPDYYYVLTVAGQSNA) are cleaved as a signal peptide.

The protein resides in the periplasm. Its function is as follows. Probably catalyzes the hydrolysis of the 9-O-acetyl group of 9-O-acetyl-N-acetylneuraminate (Neu5,9Ac2). Is required for growth of E.coli on Neu5,9Ac2, an alternative sialic acid commonly found in mammalian host mucosal sites, in particular in the human intestine. This Escherichia coli (strain K12) protein is Probable 9-O-acetyl-N-acetylneuraminic acid deacetylase (nanS).